We begin with the raw amino-acid sequence, 473 residues long: Levansucrase (473 aa).

A signal peptide spans 1-29; that stretch reads MNIKKFAKQATVLTFTTALLAGGATQAFA. Trp-85, Asp-86, and Ser-164 together coordinate sucrose. The active-site Nucleophile is the Asp-86. Position 241 (Asp-241) interacts with Ca(2+). 2 residues coordinate sucrose: Arg-246 and Asp-247. The Ca(2+) site is built by Gln-272, Leu-308, Asn-310, and Asp-339. Residue Glu-340 coordinates sucrose. Residue Glu-342 is the Proton donor/acceptor of the active site. Residue Arg-360 coordinates sucrose.

This sequence belongs to the glycosyl hydrolase 68 family. Monomer.

Its subcellular location is the secreted. The catalysed reaction is [6)-beta-D-fructofuranosyl-(2-&gt;](n) alpha-D-glucopyranoside + sucrose = [6)-beta-D-fructofuranosyl-(2-&gt;](n+1) alpha-D-glucopyranoside + D-glucose. Its activity is regulated as follows. Ca(2+) may play an important structural role and promote stability of levansucrase. The enzyme concentration is a factor defining the molecular weight (MW) levan distribution. A bimodal distribution is reported at the usual enzyme concentrations. At low concentrations, the enzyme synthesizes high MW levan, and at high concentrations, it synthesizes low MW levan. Catalyzes the synthesis of levan, a fructose polymer, by transferring the fructosyl moiety from sucrose to a growing acceptor molecule. Also displays sucrose hydrolase activity. At low sucrose concentrations, functions as an hydrolase with water as acceptor, whereas at higher substrate concentrations it adds fructosyl units to a growing levan chain. The polypeptide is Levansucrase (Bacillus subtilis (strain 168)).